The chain runs to 606 residues: NADH-ubiquinone oxidoreductase chain 5 (606 aa).

The next 16 membrane-spanning stretches (helical) occupy residues 1–21, 43–63, 88–108, 117–137, 140–160, 171–191, 209–229, 241–261, 273–293, 310–330, 366–386, 413–433, 457–477, 488–508, 513–533, and 582–602; these read MNLFTPLMLTAMFILLLPIIM, AFIISMIPTMMFISSGQEAII, IFIPVALFVTWSIMEFSMWYM, FFKYLLMFLITMMILVTANNL, LFIGWEGVGIMSFLLIGWWYG, AILYNRIGDVGFIMAMAWFLT, LNIPLLGLLLAATGKSAQFGL, TPVSALLHSSTMVVAGVFLLI, MQTLTLCLGAITTLFTAICAL, LGLMIVTIGINQPYLAFLHIC, MPFTTTSLIIGSLALTGMPFL, LIATSLTAAYSTRIMFFVLLG, LLIGSIFAGYLISYNIPPTTI, LTALAVTIAGFILALELNLAA, FMYPSNLFKFSNLLGYFPIVM, and GLVKLYFLSFMITLALSLILL.

This sequence belongs to the complex I subunit 5 family. In terms of assembly, core subunit of respiratory chain NADH dehydrogenase (Complex I) which is composed of 45 different subunits.

The protein resides in the mitochondrion inner membrane. It catalyses the reaction a ubiquinone + NADH + 5 H(+)(in) = a ubiquinol + NAD(+) + 4 H(+)(out). Its function is as follows. Core subunit of the mitochondrial membrane respiratory chain NADH dehydrogenase (Complex I) which catalyzes electron transfer from NADH through the respiratory chain, using ubiquinone as an electron acceptor. Essential for the catalytic activity and assembly of complex I. This Felis catus (Cat) protein is NADH-ubiquinone oxidoreductase chain 5 (MT-ND5).